The primary structure comprises 184 residues: Large ribosomal subunit protein bL17 (184 aa).

The disordered stretch occupies residues 126 to 184; it reads TRAARAAASKQTADEAQVEETPAEEVTEETAAEETTEAAQADEAPAEEAPVEEKKDEEK. Over residues 141–161 the composition is skewed to acidic residues; the sequence is AQVEETPAEEVTEETAAEETT.

It belongs to the bacterial ribosomal protein bL17 family. In terms of assembly, part of the 50S ribosomal subunit. Contacts protein L32.

The polypeptide is Large ribosomal subunit protein bL17 (Corynebacterium efficiens (strain DSM 44549 / YS-314 / AJ 12310 / JCM 11189 / NBRC 100395)).